We begin with the raw amino-acid sequence, 181 residues long: UPF0215 protein AF_1433 (181 aa).

Belongs to the UPF0215 family.

In Archaeoglobus fulgidus (strain ATCC 49558 / DSM 4304 / JCM 9628 / NBRC 100126 / VC-16), this protein is UPF0215 protein AF_1433.